Consider the following 529-residue polypeptide: DEP domain-containing protein 1B (529 aa).

The DEP domain maps to 24 to 108; sequence FRARMPLRRH…DNRHLYRFPP (85 aa). The residue at position 160 (Ser160) is a Phosphoserine. The Rho-GAP domain occupies 201-393; sequence DSLEEVLNTK…FLMDNYQEIL (193 aa). Phosphoserine is present on Ser436.

This is DEP domain-containing protein 1B (Depdc1b) from Mus musculus (Mouse).